A 734-amino-acid polypeptide reads, in one-letter code: Photosystem I P700 chlorophyll a apoprotein A2 (734 aa).

A run of 8 helical transmembrane segments spans residues 46–69 (IFASHFGHLAVIFLWTSGNLFHVA), 135–158 (LYAGSLFLLFLAGVFLFAGWLHLQ), 175–199 (LNHHLSGLFGFSSLAWSAHLIHVAI), 273–291 (IAHHHLAIGVVFIFAGHMY), 330–353 (LHFQLGLALASLGVITSLVAQHMY), 369–395 (SALYTHHQYIAGFLMVGAFAHGAIFFV), 417–439 (AIISHLSWVSLFLGFHTLGIYVH), and 517–535 (FLIHHAIALALHTTTLILV). Residues Cys559 and Cys568 each coordinate [4Fe-4S] cluster. 2 consecutive transmembrane segments (helical) span residues 575-596 (AFYLSMFWMLNTIGWVTFYWHW) and 643-665 (LSVWSWMFLFGHLIWATGFMFLI). Chlorophyll a-binding residues include His654, Met662, and Tyr670. Trp671 is a phylloquinone binding site. A helical transmembrane segment spans residues 707 to 727 (LVGLIHFTAGYIFTYAAFVIA).

This sequence belongs to the PsaA/PsaB family. As to quaternary structure, the PsaA/B heterodimer binds the P700 chlorophyll special pair and subsequent electron acceptors. PSI consists of a core antenna complex that captures photons, and an electron transfer chain that converts photonic excitation into a charge separation. The eukaryotic PSI reaction center is composed of at least 11 subunits. The cofactor is P700 is a chlorophyll a/chlorophyll a' dimer, A0 is one or more chlorophyll a, A1 is one or both phylloquinones and FX is a shared 4Fe-4S iron-sulfur center..

The protein localises to the plastid. It is found in the chloroplast thylakoid membrane. The catalysed reaction is reduced [plastocyanin] + hnu + oxidized [2Fe-2S]-[ferredoxin] = oxidized [plastocyanin] + reduced [2Fe-2S]-[ferredoxin]. PsaA and PsaB bind P700, the primary electron donor of photosystem I (PSI), as well as the electron acceptors A0, A1 and FX. PSI is a plastocyanin/cytochrome c6-ferredoxin oxidoreductase, converting photonic excitation into a charge separation, which transfers an electron from the donor P700 chlorophyll pair to the spectroscopically characterized acceptors A0, A1, FX, FA and FB in turn. Oxidized P700 is reduced on the lumenal side of the thylakoid membrane by plastocyanin or cytochrome c6. This chain is Photosystem I P700 chlorophyll a apoprotein A2, found in Rhodomonas salina (Cryptomonas salina).